The sequence spans 445 residues: Alpha/beta hydrolase psoB (445 aa).

S246 (nucleophile) is an active-site residue.

This sequence belongs to the AB hydrolase superfamily. FUS2 hydrolase family. As to quaternary structure, homodimer.

It functions in the pathway secondary metabolite biosynthesis. In terms of biological role, alpha/beta hydrolase; part of the gene cluster that mediates the biosynthesis of pseurotin A, a competitive inhibitor of chitin synthase and an inducer of nerve-cell proliferation. The PKS-NRPS hybrid synthetase psoA is responsible for the biosynthesis of azaspirene, one of the first intermediates having the 1-oxa-7-azaspiro[4,4]-non-2-ene-4,6-dione core of pseurotin, via condensation of one acetyl-CoA, 4 malonyl-CoA, and a L-phenylalanine molecule. The dual-functional monooxygenase/methyltransferase psoF seems to be involved in the addition of the C3 methyl group onto the pseurotin scaffold. Azaspirene is then converted to synerazol through 4 steps including oxidation of C17 by the cytochrome P450 monooxygenase psoD, O-methylation of the hydroxy group of C8 by the methyltransferase psoC, and the trans-to-cis isomerization of the C13 olefin by the glutathione S-transferase psoE. The fourth step of synerazol production is performed by the dual-functional monooxygenase/methyltransferase psoF which seems to catalyze the epoxidation of the intermediate deepoxy-synerazol. Synerazol can be attacked by a water molecule nonenzymatically at two different positions to yield two diol products, pseurotin A and pseurotin D. This is Alpha/beta hydrolase psoB from Aspergillus fumigatus (strain ATCC MYA-4609 / CBS 101355 / FGSC A1100 / Af293) (Neosartorya fumigata).